The following is a 102-amino-acid chain: Large ribosomal subunit protein bL21 (102 aa).

The protein belongs to the bacterial ribosomal protein bL21 family. As to quaternary structure, part of the 50S ribosomal subunit. Contacts protein L20.

This protein binds to 23S rRNA in the presence of protein L20. The polypeptide is Large ribosomal subunit protein bL21 (Geotalea uraniireducens (strain Rf4) (Geobacter uraniireducens)).